The sequence spans 928 residues: Chromatin structure-remodeling complex subunit RSC1 (928 aa).

Bromo domains are found at residues 4 to 112 (QDNG…IVHN) and 240 to 342 (RIKN…VRIE). The BAH domain occupies 368–486 (EKYQIGDWVL…ESDKVFNKIR (119 aa)). Disordered regions lie at residues 558-586 (DDLGEYSTSDDCPRYIIRPNDPPEEGKID), 598-635 (TTSSMPRVNSSSTIRLPTLKQTKSIPSSNFRSSSNTPL), 657-701 (HNLL…KPAS), and 871-908 (IASGDNDGKECDTAEESEDENEDTEDEHEIEDIPTTSA). Residues 600 to 620 (SSMPRVNSSSTIRLPTLKQTK) are compositionally biased toward polar residues. The segment covering 621–631 (SIPSSNFRSSS) has biased composition (low complexity). Over residues 667–679 (KFQSPSLLEQSSR) the composition is skewed to polar residues. Ser-670 carries the phosphoserine modification. Low complexity predominate over residues 692 to 701 (SSTAPKKPAS). Residues 883-902 (TAEESEDENEDTEDEHEIED) show a composition bias toward acidic residues.

It belongs to the RSC1 family. Component of the two forms of the RSC complex composed of at least either RSC1 or RSC2, and ARP7, ARP9, LDB7, NPL6, RSC3, RSC30, RSC4, RSC58, RSC6, RSC8, RSC9, SFH1, STH1, HTL1 and probably RTT102. The complexes interact with histone and histone variant components of centromeric chromatin.

The protein resides in the nucleus. Component of the chromatin structure remodeling complex (RSC), which is involved in transcription regulation and nucleosome positioning. RSC is responsible for the transfer of a histone octamer from a nucleosome core particle to naked DNA. The reaction requires ATP and involves an activated RSC-nucleosome intermediate. Remodeling reaction also involves DNA translocation, DNA twist and conformational change. As a reconfigurer of centromeric and flanking nucleosomes, RSC complex is required both for proper kinetochore function in chromosome segregation and, via a PKC1-dependent signaling pathway, for organization of the cellular cytoskeleton. This subunit is involved in meiotic sporulation through regulating IME2 expression. The chain is Chromatin structure-remodeling complex subunit RSC1 (RSC1) from Saccharomyces cerevisiae (strain ATCC 204508 / S288c) (Baker's yeast).